The sequence spans 256 residues: HTH-type transcriptional regulator PrtR (256 aa).

An HTH cro/C1-type domain is found at 16–69; it reads LKQAMAMRNLKQETLAEAAGVSQNTIHKLTSGKAQSTRKLIEIAAALGVSPVWL. The H-T-H motif DNA-binding region spans 27–46; it reads QETLAEAAGVSQNTIHKLTS.

In terms of biological role, represses the promoter activity of the prtN gene. This chain is HTH-type transcriptional regulator PrtR (prtR), found in Pseudomonas aeruginosa (strain ATCC 15692 / DSM 22644 / CIP 104116 / JCM 14847 / LMG 12228 / 1C / PRS 101 / PAO1).